We begin with the raw amino-acid sequence, 345 residues long: Heat stress transcription factor A-2 (345 aa).

Low complexity predominate over residues 17–30; it reads GSVAASSSVGSSSS. Positions 17–40 are disordered; the sequence is GSVAASSSVGSSSSPRPMEGLNET. Residues 42–136 mediate DNA binding; it reads PPPFLTKTYE…LLKNIKRRRN (95 aa). The segment at 150–216 is hydrophobic repeat HR-A/B; it reads SCVEVGQYGF…QMMTFLAKAL (67 aa). Residues 231 to 238 carry the Nuclear localization signal motif; that stretch reads EKKSLFGL. Residues 273–282 carry the AHA1 motif; that stretch reads EMLFAAAIDD. Lys315 participates in a covalent cross-link: Glycyl lysine isopeptide (Lys-Gly) (interchain with G-Cter in SUMO). The AHA2 motif lies at 324 to 333; it reads LDWDSQDLHD. Positions 334-341 match the Nuclear export signal motif; it reads MVDQMGFL.

It belongs to the HSF family. Class A subfamily. In terms of assembly, homotrimer. Interacts with SUMO1. Binds to HSBP. In terms of processing, exhibits temperature-dependent phosphorylation. Sumoylated at Lys-315. Sumoylation represses its function.

Its subcellular location is the cytoplasm. It is found in the nucleus. Its function is as follows. Transcriptional activator that specifically binds DNA sequence 5'-AGAAnnTTCT-3' known as heat shock promoter elements (HSE). Seems to be involved in other environmental stress responses. Activates ascorbate peroxidase 2 (APX2) in addition to several heat shock protein (HSPs). Binds to the promoter of SGIP1 and activates its expression in heat acclimated plants. Involved in the mechanisms necessary for quick response to heat and subsequent heritable transgenerational memory of heat acclimation (global warming) such as early flowering and attenuated immunity; this process includes epigenetic regulation as well as post-transcriptional gene silencing (PTGS). In response to heat, HSFA2 is activated and promotes the expression of REF6 which in turn derepresses HSFA2, thus establishing an inheritable feedback loop able to trigger SGIP1 and subsequent SGIP1-mediated SGS3 degradation; this prevents the biosynthesis of trans-acting siRNA (tasiRNA) and leads to the release of HTT5, which drives early flowering but attenuates immunity. This chain is Heat stress transcription factor A-2, found in Arabidopsis thaliana (Mouse-ear cress).